Reading from the N-terminus, the 238-residue chain is MQLPLLQPAIFIRRYKRFMADVELPNGEILTIHCANTGAMTGCAEKGDTVWYSDSKSTTRKYPCSWELTQLSNGSLVCINTHRSNQLVHEALQNKVIKELADYSEIYPEVKYGEENSRIDFLLKGEGLPDCYVEVKSITLVKNSIGMFPDAVTTRGQKHVRELLAMKKQGHRAVVLFAGLHNGFDCFKIAEHIDPEYDRLLKDAMRQGVEAYAYAGAFEKTQEIPTALSLTGKVPFIE.

The protein belongs to the SfsA family.

The chain is Sugar fermentation stimulation protein homolog from Actinobacillus succinogenes (strain ATCC 55618 / DSM 22257 / CCUG 43843 / 130Z).